Reading from the N-terminus, the 308-residue chain is L-lactate dehydrogenase 2 (308 aa).

NAD(+) contacts are provided by residues V14, D35, Y65, and 79–80 (GA). R88 contributes to the substrate binding site. S101 is an NAD(+) binding site. A substrate-binding site is contributed by 120-123 (NPVD). T143 serves as a coordination point for NAD(+). 148–151 (DTAR) provides a ligand contact to substrate. H175 acts as the Proton acceptor in catalysis. T225 provides a ligand contact to substrate.

It belongs to the LDH/MDH superfamily. LDH family. Homotetramer.

Its subcellular location is the cytoplasm. The catalysed reaction is (S)-lactate + NAD(+) = pyruvate + NADH + H(+). The protein operates within fermentation; pyruvate fermentation to lactate; (S)-lactate from pyruvate: step 1/1. Catalyzes the conversion of lactate to pyruvate. This Lactobacillus johnsonii (strain CNCM I-12250 / La1 / NCC 533) protein is L-lactate dehydrogenase 2.